We begin with the raw amino-acid sequence, 682 residues long: DNA-directed RNA polymerase subunit beta' (682 aa).

Residues Cys-69, Cys-71, Cys-87, and Cys-90 each contribute to the Zn(2+) site. Positions 491, 493, and 495 each coordinate Mg(2+).

The protein belongs to the RNA polymerase beta' chain family. RpoC1 subfamily. As to quaternary structure, in plastids the minimal PEP RNA polymerase catalytic core is composed of four subunits: alpha, beta, beta', and beta''. When a (nuclear-encoded) sigma factor is associated with the core the holoenzyme is formed, which can initiate transcription. Mg(2+) is required as a cofactor. It depends on Zn(2+) as a cofactor.

Its subcellular location is the plastid. It is found in the chloroplast. The catalysed reaction is RNA(n) + a ribonucleoside 5'-triphosphate = RNA(n+1) + diphosphate. Its function is as follows. DNA-dependent RNA polymerase catalyzes the transcription of DNA into RNA using the four ribonucleoside triphosphates as substrates. This chain is DNA-directed RNA polymerase subunit beta', found in Lotus japonicus (Lotus corniculatus var. japonicus).